A 274-amino-acid chain; its full sequence is WIMGHMVNAIEQVDEFLNLGANAIEFDIDLDKGGIAQITHHGIPCDCGRKCTKKAIFTEYLDNIRQVTTPDDPKFREQLVLLALDLKLQRISSAKAYRAGEDVAKKLLDHYWQRGNSRARAYILLNIPLVEDYEFIRAFKDTLKNEGYESYNDKVGINFTGNEDLDKICDVLEILGFHKQVWQADGITSCFARGTERLKEALEKRDTPGYNYINKVYAWTLVRKSIMRRTLRLGVDGVMSNNPDRVIKVLKEKEFADKFRLATYNDNPWEKFRG.

The active site involves His5. Positions 25 and 27 each coordinate Mg(2+). The Nucleophile role is filled by His41. Intrachain disulfides connect Cys45–Cys51 and Cys47–Cys190. Asp85 lines the Mg(2+) pocket.

This sequence belongs to the arthropod phospholipase D family. Class II subfamily. The cofactor is Mg(2+). As to expression, expressed by the venom gland.

It is found in the secreted. The catalysed reaction is an N-(acyl)-sphingosylphosphocholine = an N-(acyl)-sphingosyl-1,3-cyclic phosphate + choline. It catalyses the reaction an N-(acyl)-sphingosylphosphoethanolamine = an N-(acyl)-sphingosyl-1,3-cyclic phosphate + ethanolamine. The enzyme catalyses a 1-acyl-sn-glycero-3-phosphocholine = a 1-acyl-sn-glycero-2,3-cyclic phosphate + choline. It carries out the reaction a 1-acyl-sn-glycero-3-phosphoethanolamine = a 1-acyl-sn-glycero-2,3-cyclic phosphate + ethanolamine. In terms of biological role, dermonecrotic toxins cleave the phosphodiester linkage between the phosphate and headgroup of certain phospholipids (sphingolipid and lysolipid substrates), forming an alcohol (often choline) and a cyclic phosphate. This toxin acts on sphingomyelin (SM). It may also act on ceramide phosphoethanolamine (CPE), lysophosphatidylcholine (LPC) and lysophosphatidylethanolamine (LPE), but not on lysophosphatidylserine (LPS), and lysophosphatidylglycerol (LPG). It acts by transphosphatidylation, releasing exclusively cyclic phosphate products as second products. Induces dermonecrosis, hemolysis, increased vascular permeability, edema, inflammatory response, and platelet aggregation. This chain is Dermonecrotic toxin SdSicTox-betaIIB1biv, found in Sicarius cf. damarensis (strain GJB-2008) (Six-eyed sand spider).